The chain runs to 350 residues: Deoxyhypusine synthase-like protein (350 aa).

It belongs to the deoxyhypusine synthase family.

The polypeptide is Deoxyhypusine synthase-like protein (Chlorobaculum parvum (strain DSM 263 / NCIMB 8327) (Chlorobium vibrioforme subsp. thiosulfatophilum)).